The chain runs to 304 residues: MSWIERILNKSNITQTRKAGIPEGVWTKCDSCGQVLYRAELERNLEVCPKCDHHMRMSARARLHMLLDAGSEVELGSELEPKDILKFRDSKKYKDRISAAQKDTGEKDALVAMKGTLQGMPIVAASFEFAFMGGSMASVVGARFVRAVEQALEDNCPLVCFSSSGGARMQEALMSLMQMAKTSAALAKMQERGLPYISVLTDPTMGGVSASLAMLGDINIAEPKALIGFAGPRVIEQTVREKLPPGFQRSEFLIEKGAIDMIVRRPVMRQTLASILSKLTHQPQPSVVESKADTVAQPENQADV.

One can recognise a CoA carboxyltransferase N-terminal domain in the interval 25 to 294; sequence VWTKCDSCGQ…PSVVESKADT (270 aa). Zn(2+) contacts are provided by C29, C32, C48, and C51. The C4-type zinc-finger motif lies at 29-51; the sequence is CDSCGQVLYRAELERNLEVCPKC.

The protein belongs to the AccD/PCCB family. In terms of assembly, acetyl-CoA carboxylase is a heterohexamer composed of biotin carboxyl carrier protein (AccB), biotin carboxylase (AccC) and two subunits each of ACCase subunit alpha (AccA) and ACCase subunit beta (AccD). Requires Zn(2+) as cofactor.

The protein localises to the cytoplasm. It catalyses the reaction N(6)-carboxybiotinyl-L-lysyl-[protein] + acetyl-CoA = N(6)-biotinyl-L-lysyl-[protein] + malonyl-CoA. It participates in lipid metabolism; malonyl-CoA biosynthesis; malonyl-CoA from acetyl-CoA: step 1/1. Functionally, component of the acetyl coenzyme A carboxylase (ACC) complex. Biotin carboxylase (BC) catalyzes the carboxylation of biotin on its carrier protein (BCCP) and then the CO(2) group is transferred by the transcarboxylase to acetyl-CoA to form malonyl-CoA. In Yersinia pestis (strain Pestoides F), this protein is Acetyl-coenzyme A carboxylase carboxyl transferase subunit beta.